The sequence spans 239 residues: Ribosomal RNA small subunit methyltransferase G (239 aa).

Residues glycine 78, phenylalanine 83, 129–130 (AE), and arginine 148 contribute to the S-adenosyl-L-methionine site.

It belongs to the methyltransferase superfamily. RNA methyltransferase RsmG family.

The protein localises to the cytoplasm. Its function is as follows. Specifically methylates the N7 position of a guanine in 16S rRNA. The polypeptide is Ribosomal RNA small subunit methyltransferase G (Clostridium tetani (strain Massachusetts / E88)).